We begin with the raw amino-acid sequence, 67 residues long: Large ribosomal subunit protein uL29 (67 aa).

The protein belongs to the universal ribosomal protein uL29 family.

The protein is Large ribosomal subunit protein uL29 of Exiguobacterium sibiricum (strain DSM 17290 / CCUG 55495 / CIP 109462 / JCM 13490 / 255-15).